Here is a 498-residue protein sequence, read N- to C-terminus: L-amino acid oxidase (498 aa).

A signal peptide spans 1–11; sequence SLLFLAAVGSC. Cys21 and Cys184 form a disulfide bridge. FAD is bound by residues 54-55, 74-75, 74-78, Arg82, and 98-101; these read MS, EA, EASER, and GPMR. Substrate is bound at residue Arg101. Residue Asn183 is glycosylated (N-linked (GlcNAc...) asparagine). Residue His234 participates in substrate binding. Residue Val272 participates in FAD binding. Cys342 and Cys423 are oxidised to a cystine. Tyr383 provides a ligand contact to substrate. FAD-binding positions include Glu468, 475–480, and 476–480; these read GWIDST and WIDST. Substrate is bound at residue 475-476; sequence GW.

The protein belongs to the flavin monoamine oxidase family. FIG1 subfamily. In terms of assembly, homodimer; non-covalently linked. FAD is required as a cofactor. Post-translationally, N-glycosylated. Contains 18.73% carbohydrates. Expressed by the venom gland.

The protein localises to the secreted. It carries out the reaction an L-alpha-amino acid + O2 + H2O = a 2-oxocarboxylate + H2O2 + NH4(+). The catalysed reaction is L-leucine + O2 + H2O = 4-methyl-2-oxopentanoate + H2O2 + NH4(+). Its activity is regulated as follows. Strongly inhibited by glutathione, and moderately inhibited by PMSF, acetate iodine and glutamic acid. Is also inhibited by Zn(2+) ions, but not by Ca(2+), Mg(2+) and Mn(2+). Functionally, catalyzes an oxidative deamination of predominantly hydrophobic and aromatic L-amino acids, thus producing hydrogen peroxide that may contribute to the diverse toxic effects of this enzyme. This enzyme shows activity on L-Leu. This enzyme inhibits platelet aggregation in human platelet rich plasma induced by ADP (IC(50)=3.2 mg/mL), and shows antibacterial activities on both Gram-positive and Gram-negative bacteria (P.aeruginosa, V.cholerae, S.aureus, E.faecalis and E.coli). These two effects are due to hydrogen peroxide, since they are inhibited by catalase. It also induces edema in mouse paw pads but does not show hemolytic activity. This protein may also have activities in hemorrhage, and apoptosis. The sequence is that of L-amino acid oxidase from Bothrops pictus (Desert lancehead).